Consider the following 356-residue polypeptide: Sensor protein BasS (356 aa).

The Cytoplasmic portion of the chain corresponds to 1–13 (MRFQRRAMTLRQR). A helical transmembrane segment spans residues 14-34 (LMLTIGLILLVFQLISTFWLW). Residues 35-64 (HESTEQIQLFEQALRDNRNNDRHIMHEIRE) are Periplasmic-facing. The helical transmembrane segment at 65–88 (AVASLIVPGVFMVSLTLLICYQAV) threads the bilayer. Residues 89 to 141 (RRITRPLAELQKELEARTADNLAPIAIHSSTLEIESVVSAINQLVTRLTTTLD) form the HAMP domain. Over 89–356 (RRITRPLAEL…TRAWVLLKKA (268 aa)) the chain is Cytoplasmic. The region spanning 149-356 (DVAHELRTPL…TRAWVLLKKA (208 aa)) is the Histidine kinase domain. The residue at position 152 (histidine 152) is a Phosphohistidine; by autocatalysis.

Autophosphorylated.

It is found in the cell inner membrane. It carries out the reaction ATP + protein L-histidine = ADP + protein N-phospho-L-histidine.. Functionally, member of the two-component regulatory system BasS/BasR. Autophosphorylates and activates BasR by phosphorylation. Plays a role in the adaptation of the organism to the host environment, in particular to neutrophils, and therefore it plays a role in virulence as well. The sequence is that of Sensor protein BasS (basS) from Salmonella typhimurium (strain LT2 / SGSC1412 / ATCC 700720).